The following is a 340-amino-acid chain: Adenosine receptor A2b (340 aa).

Residues 1–6 are Extracellular-facing; sequence MNTMKT. The chain crosses the membrane as a helical span at residues 7–31; that stretch reads TYIVLELIIAVLSIAGNVLVCWAVA. At 32–41 the chain is on the cytoplasmic side; the sequence is INSTLKNATN. The chain crosses the membrane as a helical span at residues 42 to 65; it reads YFLVSLAVADIAVGLLAIPFAITI. Residues 66–76 are Extracellular-facing; it reads SIGFQVDFHSC. Cysteine 76 and cysteine 171 form a disulfide bridge. The helical transmembrane segment at 77 to 99 threads the bilayer; it reads LFFACFVLVLTQSSIFSLLAVAI. The Cytoplasmic segment spans residues 100-119; sequence DRYLAIKIPLRYNSLVTGKR. Residues 120–142 traverse the membrane as a helical segment; it reads ARGLIAVLWLLSFVIGLTPLMGW. Over 143 to 178 the chain is Extracellular; the sequence is NKAMSGCPNSTNETGADHGAGHHGCFISCLFENVVT. N-linked (GlcNAc...) asparagine glycans are attached at residues asparagine 151 and asparagine 154. Glutamate 174 serves as a coordination point for adenosine. A helical transmembrane segment spans residues 179–203; it reads MSYMVYFNFFGCVLLPLIIMLGIYI. Residues 204 to 235 lie on the Cytoplasmic side of the membrane; the sequence is KIFMVACKQLHQIELMGNSRTTLQKEVHAAKS. Residues 236-259 traverse the membrane as a helical segment; the sequence is LAIIVGLFAFCWLPLHILNCITHF. Asparagine 254 contributes to the adenosine binding site. Residues 260-267 are Extracellular-facing; it reads HEEFSKSK. A helical membrane pass occupies residues 268–291; sequence PEWVMYVAIILSHANSVINPIIYA. Adenosine is bound by residues serine 279 and histidine 280. Over 292–340 the chain is Cytoplasmic; that stretch reads YRIRDFRYTFHKIISKILCKTDDFPKCTTDNNQHLTVTNVNAPAASVTI. A lipid anchor (S-palmitoyl cysteine) is attached at cysteine 310.

It belongs to the G-protein coupled receptor 1 family.

It localises to the cell membrane. Functionally, receptor for adenosine. The activity of this receptor is mediated by G proteins which activate adenylyl cyclase. The chain is Adenosine receptor A2b (ADORA2B) from Gallus gallus (Chicken).